We begin with the raw amino-acid sequence, 245 residues long: Probable phosphatase YcdX (245 aa).

The Zn(2+) site is built by His7, His9, His15, His40, Glu73, His101, His131, Asp192, and His194.

It belongs to the PHP family. As to quaternary structure, homotrimer. Zn(2+) serves as cofactor.

This chain is Probable phosphatase YcdX, found in Shigella flexneri serotype 5b (strain 8401).